The following is a 526-amino-acid chain: Bifunctional purine biosynthesis protein PurH (526 aa).

Residues 1-147 (MSVIKRALIS…KNWKHVAIVT (147 aa)) form the MGS-like domain.

The protein belongs to the PurH family.

The enzyme catalyses (6R)-10-formyltetrahydrofolate + 5-amino-1-(5-phospho-beta-D-ribosyl)imidazole-4-carboxamide = 5-formamido-1-(5-phospho-D-ribosyl)imidazole-4-carboxamide + (6S)-5,6,7,8-tetrahydrofolate. It carries out the reaction IMP + H2O = 5-formamido-1-(5-phospho-D-ribosyl)imidazole-4-carboxamide. Its pathway is purine metabolism; IMP biosynthesis via de novo pathway; 5-formamido-1-(5-phospho-D-ribosyl)imidazole-4-carboxamide from 5-amino-1-(5-phospho-D-ribosyl)imidazole-4-carboxamide (10-formyl THF route): step 1/1. It functions in the pathway purine metabolism; IMP biosynthesis via de novo pathway; IMP from 5-formamido-1-(5-phospho-D-ribosyl)imidazole-4-carboxamide: step 1/1. In Neisseria gonorrhoeae (strain NCCP11945), this protein is Bifunctional purine biosynthesis protein PurH.